Consider the following 497-residue polypeptide: Casein kinase I isoform delta (497 aa).

2 disordered regions span residues methionine 1–asparagine 58 and proline 86–glutamine 109. Polar residues predominate over residues tryptophan 14–proline 34. Over residues glutamine 88–proline 105 the composition is skewed to low complexity. The Protein kinase domain maps to phenylalanine 191–phenylalanine 458. Residues isoleucine 197 to isoleucine 205 and lysine 220 each bind ATP. Aspartate 310 (proton acceptor) is an active-site residue.

This sequence belongs to the protein kinase superfamily. CK1 Ser/Thr protein kinase family. Casein kinase I subfamily. As to quaternary structure, monomer. As to expression, expressed throughout larval development and into the adult stage in both hypodermal seam cells and the hermaphrodite specific neuron.

It is found in the cytoplasm. The protein localises to the nucleus. Its subcellular location is the chromosome. The protein resides in the centromere. It localises to the cell junction. It is found in the adherens junction. The catalysed reaction is L-seryl-[protein] + ATP = O-phospho-L-seryl-[protein] + ADP + H(+). It carries out the reaction L-threonyl-[protein] + ATP = O-phospho-L-threonyl-[protein] + ADP + H(+). Exhibits substrate-dependent heparin activation. Essential serine/threonine-protein kinase that regulates diverse cellular growth and survival processes including Wnt signaling, DNA repair and circadian rhythms. Casein kinases are operationally defined by their preferential utilization of acidic proteins. Positively regulates the expression of components of the heterochronic pathway, which regulate developmental timing, such as the transcriptional repressor lin-42 and microRNAs such as let-7. Negatively regulates cell cycle exit and cell fusion to prevent the premature differentiation of hypodermal seam cells into adult cells. Plays a role in regulating axon branching and subsequently, the maturation of the nervous system, most likely by preventing the premature termination of transcripts for proteins such as Ankyrin/unc-44, which are required for maintaining the nervous system. May phosphorylate ssup-72 to promote nervous system maturation. The protein is Casein kinase I isoform delta of Caenorhabditis elegans.